We begin with the raw amino-acid sequence, 388 residues long: Protein TsgA homolog (388 aa).

Helical transmembrane passes span 11–31, 50–70, 77–97, 101–121, 133–153, 160–180, 206–226, 244–264, 268–288, 298–318, 332–352, and 360–380; these read WISF…GMIM, TFLN…IEII, IFSF…NSIF, INMF…TFII, LLLL…IVTA, IIWY…FLLT, VFLL…FISW, SLVS…SFII, NLYR…YCFI, YIII…ITLA, LILL…SPIV, and TLIS…LIYF.

It belongs to the major facilitator superfamily. TsgA family.

It is found in the cell membrane. The protein is Protein TsgA homolog of Buchnera aphidicola subsp. Acyrthosiphon pisum (strain Tuc7).